Reading from the N-terminus, the 209-residue chain is Ribosome maturation factor RimM (209 aa).

Residues 1–28 (MARRPQRPAPSGRAGAGRGAAGAAPPGP) form a disordered region. One can recognise a PRC barrel domain in the interval 123–197 (EDEFFTADLV…RVTIAPPEDL (75 aa)).

The protein belongs to the RimM family. In terms of assembly, binds ribosomal protein uS19.

Its subcellular location is the cytoplasm. In terms of biological role, an accessory protein needed during the final step in the assembly of 30S ribosomal subunit, possibly for assembly of the head region. Essential for efficient processing of 16S rRNA. May be needed both before and after RbfA during the maturation of 16S rRNA. It has affinity for free ribosomal 30S subunits but not for 70S ribosomes. The polypeptide is Ribosome maturation factor RimM (Methylobacterium sp. (strain 4-46)).